The primary structure comprises 429 residues: Ribosomal RNA small subunit methyltransferase B (429 aa).

Residues 254–260, aspartate 277, aspartate 303, and aspartate 322 contribute to the S-adenosyl-L-methionine site; that span reads CAAPGGK. Residue cysteine 375 is the Nucleophile of the active site.

Belongs to the class I-like SAM-binding methyltransferase superfamily. RsmB/NOP family.

The protein resides in the cytoplasm. The enzyme catalyses cytidine(967) in 16S rRNA + S-adenosyl-L-methionine = 5-methylcytidine(967) in 16S rRNA + S-adenosyl-L-homocysteine + H(+). In terms of biological role, specifically methylates the cytosine at position 967 (m5C967) of 16S rRNA. The sequence is that of Ribosomal RNA small subunit methyltransferase B from Shigella boydii serotype 18 (strain CDC 3083-94 / BS512).